The sequence spans 409 residues: Thiaminase-1 (409 aa).

Residues 1–29 form the signal peptide; the sequence is MSKVKGFIYKPLMVMLALLLVVVSPAGAG. C143 (nucleophile) is an active-site residue. The active-site Proton acceptor is E271.

As to quaternary structure, monomer.

The protein resides in the secreted. It carries out the reaction pyridine + thiamine = heteropyrithiamine + 5-(2-hydroxyethyl)-4-methylthiazole. In terms of biological role, degrades thiamine by replacing its thiazole moiety with a wide range of nucleophiles. This Paenibacillus thiaminolyticus (Bacillus thiaminolyticus) protein is Thiaminase-1.